A 248-amino-acid chain; its full sequence is Tyrosine recombinase XerD-like (248 aa).

In terms of domain architecture, Core-binding (CB) spans 1 to 72 (MIAFIEPFLA…TVNQFLYYLY (72 aa)). In terms of domain architecture, Tyr recombinase spans 92–248 (SLKPQLTRLD…PITLEKYYKM (157 aa)). R213 is an active-site residue. Y245 (O-(3'-phospho-DNA)-tyrosine intermediate) is an active-site residue.

This sequence belongs to the 'phage' integrase family. XerD-like subfamily.

Its subcellular location is the cytoplasm. Its function is as follows. Putative tyrosine recombinase. Not involved in the cutting and rejoining of the recombining DNA molecules on dif(SL) site. The polypeptide is Tyrosine recombinase XerD-like (Streptococcus equi subsp. zooepidemicus (strain MGCS10565)).